Reading from the N-terminus, the 94-residue chain is Sec-independent protein translocase protein TatA (94 aa).

The chain crosses the membrane as a helical span at residues 1–21; that stretch reads MFGRLGAPEIILILVVIILLF. Positions 44–94 are disordered; sequence AKAMKSEGQESTPAGPPNTDEQPPAQRTIQAAPGDVTSSRPVSEPTDTTKR. Over residues 62 to 72 the composition is skewed to polar residues; that stretch reads TDEQPPAQRTI.

The protein belongs to the TatA/E family. The Tat system comprises two distinct complexes: a TatABC complex, containing multiple copies of TatA, TatB and TatC subunits, and a separate TatA complex, containing only TatA subunits. Substrates initially bind to the TatABC complex, which probably triggers association of the separate TatA complex to form the active translocon.

It localises to the cell membrane. In terms of biological role, part of the twin-arginine translocation (Tat) system that transports large folded proteins containing a characteristic twin-arginine motif in their signal peptide across membranes. TatA could form the protein-conducting channel of the Tat system. In Streptomyces avermitilis (strain ATCC 31267 / DSM 46492 / JCM 5070 / NBRC 14893 / NCIMB 12804 / NRRL 8165 / MA-4680), this protein is Sec-independent protein translocase protein TatA.